We begin with the raw amino-acid sequence, 206 residues long: MVRYLGPHVKVIRKLGSLRAFTKKKIKRYFKLDTKKRKLSFNKKTSKYKIRLKEKQKLRFNFAISEKQLFNYVKKAIKLKGSSGENLLVALEMRLDNIVYRLGLAPTIISSRQLINHGHIYVDGKVVNIPSFKCKPTNNIKIKDNLVSKRIIEKNIELLDKYFRAPSHLYFNKKKLEAKVINMVKREDIKLIINELLIIEFYSRKV.

An S4 RNA-binding domain is found at 93–161 (MRLDNIVYRL…IEKNIELLDK (69 aa)).

The protein belongs to the universal ribosomal protein uS4 family. In terms of assembly, part of the 30S ribosomal subunit. Contacts protein S5. The interaction surface between S4 and S5 is involved in control of translational fidelity.

The protein localises to the plastid. Functionally, one of the primary rRNA binding proteins, it binds directly to 16S rRNA where it nucleates assembly of the body of the 30S subunit. In terms of biological role, with S5 and S12 plays an important role in translational accuracy. The sequence is that of Small ribosomal subunit protein uS4c (rps4) from Euglena longa (Euglenophycean alga).